The following is an 87-amino-acid chain: Large ribosomal subunit protein bL27c (87 aa).

A disordered region spans residues methionine 1–arginine 20.

It belongs to the bacterial ribosomal protein bL27 family.

The protein localises to the plastid. The protein resides in the chloroplast. The chain is Large ribosomal subunit protein bL27c from Gracilaria tenuistipitata var. liui (Red alga).